The following is a 482-amino-acid chain: tRNA sulfurtransferase (482 aa).

Residues 61–165 form the THUMP domain; the sequence is DVTLSVLTQT…NDKLNLIIAR (105 aa). ATP is bound by residues 183-184, lysine 265, glycine 287, and glutamine 296; that span reads LI. A disulfide bridge links cysteine 344 with cysteine 456. The region spanning 404–482 is the Rhodanese domain; that stretch reads LGSDVVVLDI…GYKNVKVYRP (79 aa). Cysteine 456 (cysteine persulfide intermediate) is an active-site residue.

Belongs to the ThiI family.

It localises to the cytoplasm. The enzyme catalyses [ThiI sulfur-carrier protein]-S-sulfanyl-L-cysteine + a uridine in tRNA + 2 reduced [2Fe-2S]-[ferredoxin] + ATP + H(+) = [ThiI sulfur-carrier protein]-L-cysteine + a 4-thiouridine in tRNA + 2 oxidized [2Fe-2S]-[ferredoxin] + AMP + diphosphate. It carries out the reaction [ThiS sulfur-carrier protein]-C-terminal Gly-Gly-AMP + S-sulfanyl-L-cysteinyl-[cysteine desulfurase] + AH2 = [ThiS sulfur-carrier protein]-C-terminal-Gly-aminoethanethioate + L-cysteinyl-[cysteine desulfurase] + A + AMP + 2 H(+). It functions in the pathway cofactor biosynthesis; thiamine diphosphate biosynthesis. Functionally, catalyzes the ATP-dependent transfer of a sulfur to tRNA to produce 4-thiouridine in position 8 of tRNAs, which functions as a near-UV photosensor. Also catalyzes the transfer of sulfur to the sulfur carrier protein ThiS, forming ThiS-thiocarboxylate. This is a step in the synthesis of thiazole, in the thiamine biosynthesis pathway. The sulfur is donated as persulfide by IscS. In Aliivibrio fischeri (strain MJ11) (Vibrio fischeri), this protein is tRNA sulfurtransferase.